The following is a 1212-amino-acid chain: MASIQTKLVSQPQTQQPLQNGFFNNYQQNIYRPQGIQSPPQQTPPSQPQQQPILPQQPQPQSQQPLHLQQQQQQQQQQQLLQQQQILQQQQQLLQLQQQQQNLIKQQQHQAQQQNFLHPQAQQVQSQLQLQSQPQPQPQPVNNVNNNNNNNNNNNNNNNNNNNKPFGTNNIHYSLVQQQQLLQQQAQQQLLQQQQHQQLLLQQQQAQQQSSLNNSLNSSGNNSTLNTSNNNNNVLLGANFNNASNPSINIGDPQLNNSNTNNVNNINTNNTNNNNKSGSIDQFGSPQIGVSYVNSSSNSAIPTPPTNQTNGSNSHSPTPVGINSNININSNLQSPQNIQQTILSPNISPNHNNNNNNNNNNNNNNNNNNNNNNKVSEELNEQLRMQQQQRQQQQQQIPQQPMQLLLQQQQQQQAQLQQQQAQLQQQQQAQLQQQQQAQLQQQQQAQQQAQQQAQQQQQQLKIYQQHFGQLQHQIHMLQQQPQNPQTQQQINGLLQQQAQIQQQQAIIIQQMQQMQQNQQIQQNQQLPQQQQQQQQQQQQQQQQAQQLLLQQQLQQQQQQQQQQQLQQAQQAQQQQQQQQQQQAQQQQQQQAQQQQQQQQQQQQQQQQQQQQQQQQQQQQQQQQQQQQQQQQQQQAQQQPQAQQSQQQAQQQQQNQQQPQQLNQNPPNQQLPQQPNQITQQQQQQQHQTNQILQNQQSQQILQLQQLQQQQQQQQQQQQQQQQQQQQQQQQLQQQQQQQQQQQQQQQQQQRQQPNQVQPNQPIDYNKKLELLNHPIWGKVLKETRQQIVLVYELLRMRCEGPHIKRNLFYQGIGLAPFSLSLPILSPSGLINATTGKPILKCTGSATSLYIVEDNNLFFQHNCGEQLVISKLFGAKVVPISTYESFLDHIVNILFNLTLLSPDELNLCTNRKNQPTFPLYQLDNKLSLVNQVQNQNQNQNNNNNNNNNNNNNINCNNANGTNIVISEVKNDINQLQPQQPPPQQQQAIPFVPSPTNDGNSVNNNINNNFINNNSFVNNNNNNNIQPTKSIIGVSNPFQNNNNNNNNNNNNNNNNNNNNNNNNNNNNNNNNNNNNNNNNNTNNNINNNINNQQQLYIQQQQYSQQQQQQQQNPQQQNPQQQNPQQLQQQQHLQQLQQQLLQQQLLQQQQQQQQQQQQQQQMQQQIQQPPQQNIEPINQLSDNQINMQQFNMLNNTNGNFNINNTNNLVRSSVQY.

The segment covering 1–31 (MASIQTKLVSQPQTQQPLQNGFFNNYQQNIY) has biased composition (polar residues). Disordered regions lie at residues 1-70 (MASI…HLQQ), 119-169 (PQAQ…FGTN), 211-231 (SLNN…SNNN), 248-374 (INIG…NNNK), 655-681 (QQQP…TQQQ), 935-957 (NQNQ…CNNA), and 973-1125 (QLQP…QQLQ). 2 stretches are compositionally biased toward low complexity: residues 48 to 70 (PQQQ…HLQQ) and 119 to 163 (PQAQ…NNNN). Over residues 256-275 (NNSNTNNVNNINTNNTNNNN) the composition is skewed to low complexity. 2 stretches are compositionally biased toward polar residues: residues 276–285 (KSGSIDQFGS) and 292–317 (YVNS…SHSP). Positions 322-340 (INSNININSNLQSPQNIQQ) are enriched in low complexity. Residues 341 to 351 (TILSPNISPNH) show a composition bias toward polar residues. Over residues 352 to 373 (NNNNNNNNNNNNNNNNNNNNNN) the composition is skewed to low complexity. Low complexity-rich tracts occupy residues 998 to 1022 (NSVN…NNNN) and 1037 to 1125 (QNNN…QQLQ).

This is an uncharacterized protein from Dictyostelium discoideum (Social amoeba).